Consider the following 425-residue polypeptide: Light-independent protochlorophyllide reductase subunit N (425 aa).

[4Fe-4S] cluster is bound by residues C17, C42, and C103.

It belongs to the BchN/ChlN family. As to quaternary structure, protochlorophyllide reductase is composed of three subunits; ChlL, ChlN and ChlB. Forms a heterotetramer of two ChlB and two ChlN subunits. The cofactor is [4Fe-4S] cluster.

The enzyme catalyses chlorophyllide a + oxidized 2[4Fe-4S]-[ferredoxin] + 2 ADP + 2 phosphate = protochlorophyllide a + reduced 2[4Fe-4S]-[ferredoxin] + 2 ATP + 2 H2O. It functions in the pathway porphyrin-containing compound metabolism; chlorophyll biosynthesis (light-independent). Its function is as follows. Component of the dark-operative protochlorophyllide reductase (DPOR) that uses Mg-ATP and reduced ferredoxin to reduce ring D of protochlorophyllide (Pchlide) to form chlorophyllide a (Chlide). This reaction is light-independent. The NB-protein (ChlN-ChlB) is the catalytic component of the complex. The chain is Light-independent protochlorophyllide reductase subunit N from Parasynechococcus marenigrum (strain WH8102).